The following is a 968-amino-acid chain: RNA polymerase-associated protein RapA (968 aa).

A Helicase ATP-binding domain is found at 164–334; sequence EVGQRHAPRV…FARLRLLDPD (171 aa). Residue 177 to 184 coordinates ATP; it reads DEVGLGKT. A DEAH box motif is present at residues 280-283; that stretch reads DEAH. One can recognise a Helicase C-terminal domain in the interval 490–644; the sequence is RVEWLLNYLV…TCPTGRTIYD (155 aa).

Belongs to the SNF2/RAD54 helicase family. RapA subfamily. As to quaternary structure, interacts with the RNAP. Has a higher affinity for the core RNAP than for the holoenzyme. Its ATPase activity is stimulated by binding to RNAP.

In terms of biological role, transcription regulator that activates transcription by stimulating RNA polymerase (RNAP) recycling in case of stress conditions such as supercoiled DNA or high salt concentrations. Probably acts by releasing the RNAP, when it is trapped or immobilized on tightly supercoiled DNA. Does not activate transcription on linear DNA. Probably not involved in DNA repair. The chain is RNA polymerase-associated protein RapA from Yersinia pestis bv. Antiqua (strain Antiqua).